A 146-amino-acid polypeptide reads, in one-letter code: Large ribosomal subunit protein bL9 (146 aa).

The protein belongs to the bacterial ribosomal protein bL9 family.

Binds to the 23S rRNA. The chain is Large ribosomal subunit protein bL9 from Symbiobacterium thermophilum (strain DSM 24528 / JCM 14929 / IAM 14863 / T).